The following is a 352-amino-acid chain: C-C chemokine receptor type 5 (352 aa).

At 1-30 (MDYQVSSPTYDIDYYTSEPCQKINVKQIAA) the chain is on the extracellular side. Tyr3 carries the post-translational modification Sulfotyrosine. O-linked (GalNAc...) serine glycosylation is found at Ser6 and Ser7. Residues Tyr10, Tyr14, and Tyr15 each carry the sulfotyrosine modification. 2 cysteine pairs are disulfide-bonded: Cys20/Cys269 and Cys101/Cys178. Residues 31 to 58 (RLLPPLYSLVFIFGFVGNILVVLILINC) traverse the membrane as a helical segment. Topologically, residues 59–68 (KRLKSMTDIY) are cytoplasmic. Residues 69-89 (LLNLAISDLLFLLTVPFWAHY) form a helical membrane-spanning segment. Over 90 to 102 (AAAQWDFGNIMCQ) the chain is Extracellular. The helical transmembrane segment at 103-124 (LLTGLYFIGFFSGIFFIILLTI) threads the bilayer. At 125–141 (DRYLAIVHAVFALKART) the chain is on the cytoplasmic side. A helical membrane pass occupies residues 142 to 166 (VTFGVVTSVITWVVAVFASLPGIIF). At 167–198 (TRSQREGLHYTCSSHFPYSQYQFWKNFRTLKI) the chain is on the extracellular side. The helical transmembrane segment at 199–218 (VILGLVLPLLVMVICYSGIL) threads the bilayer. Residues 219-235 (KTLLRCRNEKKRHRAVR) are Cytoplasmic-facing. A helical membrane pass occupies residues 236-260 (LIFTIMIVYFLFWAPYNIVLLLNTF). At 261-277 (QEFFGLNNCSSSNRLDQ) the chain is on the extracellular side. A helical membrane pass occupies residues 278–301 (AMQVTETLGMTHCCINPIIYAFVG). Residues 302–352 (EKFRNYLLVFFQKHIAKRFCKCCSIFQQEAPERASSVYTRTTGEQEISVGL) lie on the Cytoplasmic side of the membrane. 3 S-palmitoyl cysteine lipidation sites follow: Cys321, Cys323, and Cys324. Residues Ser336, Ser337, and Ser349 each carry the phosphoserine; by BARK1 modification.

It belongs to the G-protein coupled receptor 1 family. In terms of assembly, interacts with PRAF2. Efficient ligand binding to CCL3/MIP-1alpha and CCL4/MIP-1beta requires sulfation, O-glycosylation and sialic acid modifications. Glycosylation on Ser-6 is required for efficient binding of CCL4. Interacts with GRK2. Interacts with ARRB1 and ARRB2. Interacts with CNIH4. Interacts with S100A4; this interaction stimulates T-lymphocyte chemotaxis. Sulfated on at least 2 of the N-terminal tyrosines. Sulfation is required for efficient binding of the chemokines, CCL3 and CCL4. In terms of processing, palmitoylation in the C-terminal is important for cell surface expression. Post-translationally, phosphorylation on serine residues in the C-terminal is stimulated by binding CC chemokines especially by APO-RANTES. O-glycosylated, but not N-glycosylated. Ser-6 appears to be the major site even if Ser-7 may be also O-glycosylated. Also sialylated glycans present which contribute to chemokine binding. Thr-16 and Ser-17 may also be glycosylated and, if so, with small moieties such as a T-antigen.

It localises to the cell membrane. Receptor for a number of inflammatory CC-chemokines including CCL3/MIP-1-alpha, CCL4/MIP-1-beta and RANTES and subsequently transduces a signal by increasing the intracellular calcium ion level. May play a role in the control of granulocytic lineage proliferation or differentiation. Participates in T-lymphocyte migration to the infection site by acting as a chemotactic receptor. This Mandrillus leucophaeus (Drill) protein is C-C chemokine receptor type 5 (CCR5).